The following is a 462-amino-acid chain: Transcript termination protein A18 (462 aa).

Positions 99 to 255 constitute a Helicase ATP-binding domain; it reads KCKEKRPLYT…NSIINFIKFS (157 aa). 112–119 contacts ATP; sequence LACGFGKT. A DEAH box motif is present at residues 205–208; it reads DEAH. A Helicase C-terminal domain is found at 308-459; sequence IVDKIIETFK…ATKLGFREVS (152 aa).

The protein belongs to the helicase family. Poxviruses subfamily. In terms of assembly, interacts with G2. Might be part of a transcription complex composed at least of G2, A18, and H5.

The protein resides in the virion. DNA helicase which seems to act as a postreplicative transcription termination factor. Involved in ATP-dependent release of nascent RNA. Forms a stable complex with single-stranded DNA, and to a lesser extent RNA. This chain is Transcript termination protein A18, found in Vertebrata (FPV).